The chain runs to 229 residues: MAHRRRCLLLLLAVLLPAMAARGDPDAVQDFCVPDAGRGRPVELAMLPAYPCRSPANLTAGDFAFSGVRAAGNFSPETGFAGVSVTPAQFPGLHTLGMSFARADLSAAGGVNPPHYHPRATETALVLAGRVYAGFVDSGGRLFAKVLEQGEVMVFPRAMVHFQLNVGDTPATVYGAFNSENPGIVRIPATVFGSGIREAVLERAFGLTPAELRRLEKRFGPPKKAEMED.

Residues 1–23 (MAHRRRCLLLLLAVLLPAMAARG) form the signal peptide. Cys32 and Cys52 are joined by a disulfide. Residue Asn57 is glycosylated (N-linked (GlcNAc...) asparagine). The Cupin type-1 domain maps to 66 to 213 (SGVRAAGNFS…AFGLTPAELR (148 aa)). Residues His115, His117, Glu122, and His161 each contribute to the Mn(2+) site.

It belongs to the germin family. Oligomer (believed to be a pentamer but probably hexamer).

It is found in the secreted. The protein localises to the extracellular space. The protein resides in the apoplast. May play a role in plant defense. Probably has no oxalate oxidase activity even if the active site is conserved. The sequence is that of Germin-like protein 2-4 from Oryza sativa subsp. japonica (Rice).